The primary structure comprises 587 residues: Kelch-like protein 3 (587 aa).

At serine 10 the chain carries Phosphoserine. Residues 50–117 (CDVMIVAEDV…VYTAEIEVTE (68 aa)) form the BTB domain. The region spanning 152–254 (CLGIRAFADV…PRDYLVQTVE (103 aa)) is the BACK domain. Threonine 295 is subject to Phosphothreonine. Kelch repeat units follow at residues 302 to 347 (VMIV…FMAG), 348 to 394 (HVYA…VLND), 396 to 441 (LYAV…VVEG), 442 to 490 (KLYA…VLSG), 491 to 537 (QLYA…AVNG), and 539 to 585 (LYVV…VIHK). Position 375 is a phosphothreonine (threonine 375). A phosphoserine mark is found at serine 376 and serine 433.

Belongs to the KLHL3 family. In terms of assembly, homodimer. Component of the BCR(KLHL3) E3 ubiquitin ligase complex, at least composed of CUL3 and KLHL3 and RBX1. Interacts with CLDN8. Phosphorylation at Ser-433 by PKA or PKC decreases the interaction with WNK1 and WNK4, leading to inhibit their degradation by the BCR(KLHL3) complex. Phosphorylated at Ser-433 by PKC in response to angiotensin II signaling, decreasing ability to promote degradation of WNK1 and WNK4, leading to activation of Na-Cl cotransporter SLC12A3/NCC. Phosphorylation at Ser-433 is increased by insulin. Dephosphorylated at Ser-433 by calcineurin PPP3CA, promoting degradation of WNK1 and WNK4.

Its subcellular location is the cytoplasm. It is found in the cytoskeleton. It localises to the cytosol. The protein operates within protein modification; protein ubiquitination. Substrate-specific adapter of a BCR (BTB-CUL3-RBX1) E3 ubiquitin ligase complex that acts as a regulator of ion transport in the distal nephron. The BCR(KLHL3) complex acts by mediating ubiquitination and degradation of WNK1 and WNK4, two activators of Na-Cl cotransporter SLC12A3/NCC in distal convoluted tubule cells of kidney, thereby regulating NaCl reabsorption. The BCR(KLHL3) complex also mediates ubiquitination and degradation of WNK3. The BCR(KLHL3) complex also mediates ubiquitination of CLDN8, a tight-junction protein required for paracellular chloride transport in the kidney, leading to its degradation. The sequence is that of Kelch-like protein 3 (KLHL3) from Pongo abelii (Sumatran orangutan).